We begin with the raw amino-acid sequence, 263 residues long: 3-methyl-2-oxobutanoate hydroxymethyltransferase (263 aa).

Mg(2+)-binding residues include aspartate 45 and aspartate 84. 3-methyl-2-oxobutanoate-binding positions include 45–46, aspartate 84, and lysine 112; that span reads DS. Glutamate 114 is a binding site for Mg(2+). Glutamate 180 (proton acceptor) is an active-site residue.

The protein belongs to the PanB family. Homodecamer; pentamer of dimers. It depends on Mg(2+) as a cofactor.

Its subcellular location is the cytoplasm. It catalyses the reaction 3-methyl-2-oxobutanoate + (6R)-5,10-methylene-5,6,7,8-tetrahydrofolate + H2O = 2-dehydropantoate + (6S)-5,6,7,8-tetrahydrofolate. It participates in cofactor biosynthesis; (R)-pantothenate biosynthesis; (R)-pantoate from 3-methyl-2-oxobutanoate: step 1/2. Functionally, catalyzes the reversible reaction in which hydroxymethyl group from 5,10-methylenetetrahydrofolate is transferred onto alpha-ketoisovalerate to form ketopantoate. The chain is 3-methyl-2-oxobutanoate hydroxymethyltransferase from Enterobacter sp. (strain 638).